The primary structure comprises 158 residues: Ribonuclease H (158 aa).

The RNase H type-1 domain occupies M5 to E146. 4 residues coordinate Mg(2+): D14, E52, D74, and D138.

It belongs to the RNase H family. Monomer. The cofactor is Mg(2+).

The protein resides in the cytoplasm. The catalysed reaction is Endonucleolytic cleavage to 5'-phosphomonoester.. Its function is as follows. Endonuclease that specifically degrades the RNA of RNA-DNA hybrids. The protein is Ribonuclease H of Mannheimia succiniciproducens (strain KCTC 0769BP / MBEL55E).